The chain runs to 208 residues: dITP/XTP pyrophosphatase (208 aa).

A substrate-binding site is contributed by 16–21; the sequence is SNNKGK. Residue D79 is the Proton acceptor of the active site. D79 is a binding site for Mg(2+). Substrate-binding positions include S80, 166 to 169, K189, and 194 to 195; these read FGYD and HR.

Belongs to the HAM1 NTPase family. As to quaternary structure, homodimer. Mg(2+) is required as a cofactor.

It carries out the reaction XTP + H2O = XMP + diphosphate + H(+). The enzyme catalyses dITP + H2O = dIMP + diphosphate + H(+). The catalysed reaction is ITP + H2O = IMP + diphosphate + H(+). Pyrophosphatase that catalyzes the hydrolysis of nucleoside triphosphates to their monophosphate derivatives, with a high preference for the non-canonical purine nucleotides XTP (xanthosine triphosphate), dITP (deoxyinosine triphosphate) and ITP. Seems to function as a house-cleaning enzyme that removes non-canonical purine nucleotides from the nucleotide pool, thus preventing their incorporation into DNA/RNA and avoiding chromosomal lesions. This chain is dITP/XTP pyrophosphatase, found in Acinetobacter baumannii (strain AB307-0294).